A 594-amino-acid chain; its full sequence is Lysine--tRNA ligase cla4 (594 aa).

A disordered region spans residues 1-62 (MADPGAVKET…KETSSEQDEA (62 aa)). The span at 18–42 (TGEKVSKTELKKRLKSRAKEAEKQK) shows a compositional bias: basic and acidic residues.

This sequence belongs to the class-II aminoacyl-tRNA synthetase family. Homodimer.

It carries out the reaction tRNA(Lys) + L-lysine + ATP = L-lysyl-tRNA(Lys) + AMP + diphosphate. Involved in self-resistance to cladosporin since this product is an inhibitor of lysyl-tRNA synthetase. Cla4 may not be inhibited by cladosporin, thereby imparting cladosporin resistance. When cladosporin biosynthesis is switched on, transcription of cla4 will then be necessary for continued protein synthesis in C.cladosporioides. The polypeptide is Lysine--tRNA ligase cla4 (Cladosporium cladosporioides).